We begin with the raw amino-acid sequence, 95 residues long: Secretoglobin family 2A member 2 (95 aa).

The N-terminal stretch at 1–18 (MKLVFLFLLVTIPICCYA) is a signal peptide. Residue N35 is glycosylated (N-linked (GlcNAc...) asparagine).

It belongs to the secretoglobin family. Lipophilin subfamily. As to quaternary structure, prostatein is composed of three different peptides called C1, C2 and C3. These form covalent C1:C3 (F) and C2:C3 (S) heterodimers whose non-covalent association forms tetrameric (C1:C3/C3:C2) prostatein molecules. As to expression, highly expressed in ventral prostate.

Its subcellular location is the secreted. Its function is as follows. Part of prostatein which is the major secretory glycoprotein of ventral prostate gland. Steroid-binding protein; can bind non-polar steroids, cholesterol and a group of small proline-rich peptides. The polypeptide is Secretoglobin family 2A member 2 (Scgb2a2) (Rattus norvegicus (Rat)).